The chain runs to 277 residues: Adenylate kinase (277 aa).

72 to 77 contributes to the ATP binding site; the sequence is GAGKGT. An NMP region spans residues 92-121; it reads ATGDMLRSQVAKQTALGVQAKKIMDQGGLV. Residues T93, R98, 119 to 121, 148 to 151, and Q155 each bind AMP; these read GLV and GFPR. The tract at residues 189–226 is LID; that stretch reads GRLVHPASGRSYHKLFNPPKVAMTDDVTGDPLVQRSDD. Residues R190 and 199-200 each bind ATP; that span reads SY. AMP is bound by residues R223 and R234. Q262 is a binding site for ATP.

Belongs to the adenylate kinase family. AK2 subfamily. In terms of assembly, monomer.

It localises to the cytoplasm. Its subcellular location is the cytosol. It is found in the mitochondrion intermembrane space. It carries out the reaction AMP + ATP = 2 ADP. Catalyzes the reversible transfer of the terminal phosphate group between ATP and AMP. Plays an important role in cellular energy homeostasis and in adenine nucleotide metabolism. Adenylate kinase activity is critical for regulation of the phosphate utilization and the AMP de novo biosynthesis pathways. The protein is Adenylate kinase of Eremothecium gossypii (strain ATCC 10895 / CBS 109.51 / FGSC 9923 / NRRL Y-1056) (Yeast).